Reading from the N-terminus, the 668-residue chain is MIDRQTDRAFDLVSKYQPTGDQPEAINQLTHGIEAGEKAQILLGATGTGKTFTISNVIKNVNKPTLVLSHNKTLAGQLYGEFKQFFPNNAVEYFVSYYDYYQPEAYVPSSDTYIEKDSSINDEIDKLRHSATSSLLERNDVIVVASVSSIFGLGDPTEYKNHVVSLRVGQEIERDALLRKLVNIQFERNDYDFQRGRFRVHGDVVEIFPASRDERALRVEFFGDEIDRIREVDALTGEIVGDREHVAIFPATHFMTNDDIMAQATAGIEGELKERLAELENDGKLLEAQRLKQRTTYDLEMMREMGYTSGIENYSRWMDGRQAGEPPYTLLDFFPKDFLLVVDESHVTMPQVRGMYNGDRARKQQLVDYGFRLPSALDNRPLKLNEVEQHINQVIYMSATPGPYEAEQTDHVVQQIIRPTGLLDPTIDVRPIMGQMDDLVGEINQRIEKNERTFVTTLTKKMAEDLTDYLKDLGIKVAYLHSDIKTLERTEIMRDLRLGKYDVLVGINLLREGIDIPEVSLVAILDADKEGFLRNERSLIQTIGRAARNSHGSVIMYADSVTDSMQAAMDETARRRQIQIAYNKEHGITPTTIIKPIRDLIAVSKKNDNAGEKDDFVASDFEDMTKEDQEKLIARLEDEMRAAAKKLDFEQAASLRDTIMDMKTEIGD.

The region spanning 31-188 is the Helicase ATP-binding domain; sequence HGIEAGEKAQ…RKLVNIQFER (158 aa). 44–51 provides a ligand contact to ATP; sequence GATGTGKT. Positions 97 to 120 match the Beta-hairpin motif; that stretch reads YYDYYQPEAYVPSSDTYIEKDSSI. The 167-residue stretch at 435-601 folds into the Helicase C-terminal domain; it reads QMDDLVGEIN…TIIKPIRDLI (167 aa). A UVR domain is found at 630–665; it reads EKLIARLEDEMRAAAKKLDFEQAASLRDTIMDMKTE.

This sequence belongs to the UvrB family. In terms of assembly, forms a heterotetramer with UvrA during the search for lesions. Interacts with UvrC in an incision complex.

It localises to the cytoplasm. In terms of biological role, the UvrABC repair system catalyzes the recognition and processing of DNA lesions. A damage recognition complex composed of 2 UvrA and 2 UvrB subunits scans DNA for abnormalities. Upon binding of the UvrA(2)B(2) complex to a putative damaged site, the DNA wraps around one UvrB monomer. DNA wrap is dependent on ATP binding by UvrB and probably causes local melting of the DNA helix, facilitating insertion of UvrB beta-hairpin between the DNA strands. Then UvrB probes one DNA strand for the presence of a lesion. If a lesion is found the UvrA subunits dissociate and the UvrB-DNA preincision complex is formed. This complex is subsequently bound by UvrC and the second UvrB is released. If no lesion is found, the DNA wraps around the other UvrB subunit that will check the other stand for damage. The chain is UvrABC system protein B from Levilactobacillus brevis (strain ATCC 367 / BCRC 12310 / CIP 105137 / JCM 1170 / LMG 11437 / NCIMB 947 / NCTC 947) (Lactobacillus brevis).